The sequence spans 173 residues: Large ribosomal subunit protein uL10 (173 aa).

Belongs to the universal ribosomal protein uL10 family. Part of the ribosomal stalk of the 50S ribosomal subunit. The N-terminus interacts with L11 and the large rRNA to form the base of the stalk. The C-terminus forms an elongated spine to which L12 dimers bind in a sequential fashion forming a multimeric L10(L12)X complex.

Its function is as follows. Forms part of the ribosomal stalk, playing a central role in the interaction of the ribosome with GTP-bound translation factors. The protein is Large ribosomal subunit protein uL10 of Bifidobacterium animalis subsp. lactis (strain AD011).